The chain runs to 306 residues: MPHSLRIGTRASPLAVWQAEHVRAALLRLHPGMAVEIITMTTSGDVLLDAPLHALGGKGLFVKEIEDALQQRRVDVAVHSMKDVPALQPDGLEIVAIMAREDVRDAFVSNTFLHPDALPEGARVGSSSLRRRAQLLERYPHLRVEDLRGNVATRLRRLDEGHYDAIILAAAGLKRLGLPDRITHLLDIDRSLPAVGQGAIGIEARSDDRRTRELLAPLADADTQNCVLAERSMNQVLGGDCRLPVAALARWQGPQMLLRGLVATPDGRRVLHAEAKGSDPVALGMAVAAALVAQGAAEIIEDVRNA.

Position 241 is an S-(dipyrrolylmethanemethyl)cysteine (cysteine 241).

The protein belongs to the HMBS family. Monomer. Requires dipyrromethane as cofactor.

The catalysed reaction is 4 porphobilinogen + H2O = hydroxymethylbilane + 4 NH4(+). Its pathway is porphyrin-containing compound metabolism; protoporphyrin-IX biosynthesis; coproporphyrinogen-III from 5-aminolevulinate: step 2/4. Its function is as follows. Tetrapolymerization of the monopyrrole PBG into the hydroxymethylbilane pre-uroporphyrinogen in several discrete steps. The protein is Porphobilinogen deaminase of Acidithiobacillus ferrooxidans (strain ATCC 23270 / DSM 14882 / CIP 104768 / NCIMB 8455) (Ferrobacillus ferrooxidans (strain ATCC 23270)).